The chain runs to 424 residues: 26S proteasome regulatory subunit 4 homolog (424 aa).

Over residues M1–L11 the composition is skewed to basic and acidic residues. The disordered stretch occupies residues M1–K33. G210 to T217 provides a ligand contact to ATP.

The protein belongs to the AAA ATPase family. The 26S proteasome consists of a 20S proteasome core and two 19S regulatory subunits. The 20S proteasome core is composed of 28 subunits that are arranged in four stacked rings, resulting in a barrel-shaped structure. The two end rings are each formed by seven alpha subunits, and the two central rings are each formed by seven beta subunits. The catalytic chamber with the active sites is on the inside of the barrel.

Its subcellular location is the cytoplasm. It localises to the nucleus. Its function is as follows. Acts as a regulatory subunit of the 26S proteasome which degrades poly-ubiquitinated proteins in the cytoplasm and in the nucleus. It is essential for the regulated turnover of proteins and for the removal of misfolded proteins. The proteasome is a multicatalytic proteinase complex that is characterized by its ability to cleave peptides with Arg, Phe, Tyr, Leu, and Glu adjacent to the leaving group at neutral or slightly basic pH. The chain is 26S proteasome regulatory subunit 4 homolog (RPT2) from Encephalitozoon cuniculi (strain GB-M1) (Microsporidian parasite).